We begin with the raw amino-acid sequence, 538 residues long: Lipid scramblase CLPTM1L (538 aa).

The Cytoplasmic segment spans residues 1–9; it reads MFPKTSFTS. A helical membrane pass occupies residues 10-30; sequence LIVGVFLLYVLHTCWVMYGIV. The Extracellular portion of the chain corresponds to 31-284; it reads YTKPCEKRRA…IKGIFVDTNL (254 aa). 2 N-linked (GlcNAc...) asparagine glycosylation sites follow: Asn-90 and Asn-100. The interval 140–166 is disordered; it reads ISLITGQDEPEKPDQQKQSSDSELDRP. Asn-229 is a glycosylation site (N-linked (GlcNAc...) asparagine). Residues 285–305 traverse the membrane as a helical segment; that stretch reads YFLALTFFVAAFHLLFDFLAF. Residues 306–324 lie on the Cytoplasmic side of the membrane; that stretch reads KNDISFWKHKKSMVGMSSK. Residues 325-341 traverse the membrane as a helical segment; it reads AVLWRCFSTIVIFLYLL. At 342–402 the chain is on the extracellular side; the sequence is DEQTSLLVLV…TEEYDTLAMK (61 aa). A helical membrane pass occupies residues 403 to 423; that stretch reads YLSYLLYPLCVGGAVYALVFV. At 424-428 the chain is on the cytoplasmic side; it reads KYKSW. Residues 429 to 449 traverse the membrane as a helical segment; the sequence is YSWIINSLVNGVYAFGFLFML. Over 450–538 the chain is Extracellular; the sequence is PQLFVNYKLK…EKPKGKSHED (89 aa).

It belongs to the CLPTM1 family.

It is found in the endoplasmic reticulum membrane. The catalysed reaction is a 6-(alpha-D-glucosaminyl)-1-(1,2-diacyl-sn-glycero-3-phospho)-1D-myo-inositol(in) = a 6-(alpha-D-glucosaminyl)-1-(1,2-diacyl-sn-glycero-3-phospho)-1D-myo-inositol(out). It catalyses the reaction 6-(alpha-D-glucosaminyl)-(1-octadecanoyl,2-(9Z)-octadecenoyl-sn-glycero-3-phospho)-1D-myo-inositol(in) = 6-(alpha-D-glucosaminyl)-(1-octadecanoyl,2-(9Z)-octadecenoyl-sn-glycero-3-phospho)-1D-myo-inositol(out). It carries out the reaction a 1,2-diacyl-sn-glycero-3-phospho-(1D-myo-inositol)(in) = a 1,2-diacyl-sn-glycero-3-phospho-(1D-myo-inositol)(out). The enzyme catalyses a 1,2-diacyl-sn-glycero-3-phosphocholine(in) = a 1,2-diacyl-sn-glycero-3-phosphocholine(out). The catalysed reaction is a 1,2-diacyl-sn-glycero-3-phosphoethanolamine(in) = a 1,2-diacyl-sn-glycero-3-phosphoethanolamine(out). Functionally, scramblase that mediates the translocation of glucosaminylphosphatidylinositol (alpha-D-GlcN-(1-6)-(1,2-diacyl-sn-glycero-3-phospho)-1D-myo-inositol, GlcN-PI) across the endoplasmic reticulum (ER) membrane, from the cytosolic leaflet to the luminal leaflet of the ER membrane, where it participates in the biosynthesis of glycosylphosphatidylinositol (GPI). GPI is a lipid glycoconjugate involved in post-translational modification of proteins. Can also translocate 1,2-diacyl-sn-glycero-3-phospho-(1D-myo-inositol) (phosphatidylinositol or PI), as well as several other phospholipids (1,2-diacyl-sn-glycero-3-phosphocholine, 1,2-diacyl-sn-glycero-3-phosphoethanolamine), and N-acetylglucosaminylphosphatidylinositol (GlcNAc-PI) in vitro. The protein is Lipid scramblase CLPTM1L (clptm1l) of Danio rerio (Zebrafish).